The primary structure comprises 367 residues: Aminomethyltransferase (367 aa).

The protein belongs to the GcvT family. In terms of assembly, the glycine cleavage system is composed of four proteins: P, T, L and H.

The catalysed reaction is N(6)-[(R)-S(8)-aminomethyldihydrolipoyl]-L-lysyl-[protein] + (6S)-5,6,7,8-tetrahydrofolate = N(6)-[(R)-dihydrolipoyl]-L-lysyl-[protein] + (6R)-5,10-methylene-5,6,7,8-tetrahydrofolate + NH4(+). In terms of biological role, the glycine cleavage system catalyzes the degradation of glycine. This is Aminomethyltransferase from Parasynechococcus marenigrum (strain WH8102).